The following is a 396-amino-acid chain: L-lactate dehydrogenase (396 aa).

One can recognise an FMN hydroxy acid dehydrogenase domain in the interval 1-380; that stretch reads MIISAASDYR…SGDSLVQELG (380 aa). Tyr24 contributes to the substrate binding site. Positions 106 and 127 each coordinate FMN. Residue Tyr129 participates in substrate binding. Residue Thr155 participates in FMN binding. Arg164 is a binding site for substrate. Residue Lys251 coordinates FMN. His275 (proton acceptor) is an active-site residue. Arg278 provides a ligand contact to substrate. 306-330 is an FMN binding site; the sequence is DSGIRNGLDVVRMIALGADTVLLGR.

It belongs to the FMN-dependent alpha-hydroxy acid dehydrogenase family. FMN serves as cofactor.

The protein resides in the cell inner membrane. It carries out the reaction (S)-lactate + A = pyruvate + AH2. Catalyzes the conversion of L-lactate to pyruvate. Is coupled to the respiratory chain. In Salmonella schwarzengrund (strain CVM19633), this protein is L-lactate dehydrogenase.